The following is a 423-amino-acid chain: Ferrochelatase, mitochondrial (423 aa).

Residues Met1–Gln54 constitute a mitochondrion transit peptide. Lys57 carries the N6-acetyllysine modification. Residues Arg115, Tyr123, and Ser130 each coordinate protoporphyrin IX. The residue at position 138 (Lys138) is an N6-succinyllysine. Cys196 is a binding site for [2Fe-2S] cluster. Catalysis depends on residues His230 and Asp383. Residues Cys403, Cys406, and Cys411 each coordinate [2Fe-2S] cluster. Residue Lys415 is modified to N6-acetyllysine; alternate. Residue Lys415 is modified to N6-succinyllysine; alternate.

Belongs to the ferrochelatase family. In terms of assembly, homodimer. Homotetramer. Interaction with PGRMC1; the interaction results in decreased FECH activity. Interacts with ABCB10 and SLC25A37; this interaction forms an oligomeric complex. Forms a complex with ABCB7 and ABCB10, where a dimeric FECH bridges ABCB7 and ABCB10 homodimers; this complex may be required for cellular iron homeostasis, mitochondrial function and heme biosynthesis. Interacts with ABCB7 and ABCB10. The cofactor is [2Fe-2S] cluster.

Its subcellular location is the mitochondrion inner membrane. The catalysed reaction is heme b + 2 H(+) = protoporphyrin IX + Fe(2+). It participates in porphyrin-containing compound metabolism; protoheme biosynthesis; protoheme from protoporphyrin-IX: step 1/1. Catalyzes the ferrous insertion into protoporphyrin IX and participates in the terminal step in the heme biosynthetic pathway. The protein is Ferrochelatase, mitochondrial of Pan troglodytes (Chimpanzee).